Consider the following 687-residue polypeptide: Carboxysome assembly protein CcmM (687 aa).

Residues 242–327 (SINSDITNQI…RVVEVIIQRP (86 aa)) are rbcS-like repeat 1, SSUL1. Disordered regions lie at residues 328 to 355 (GDVP…SAVA) and 442 to 476 (VHRP…SSAG). The span at 335–346 (SRGTTTTKALSS) shows a compositional bias: polar residues. Residues 366–445 (ANQLRALLHQ…RVAEIVVHRP (80 aa)) form a rbcS-like repeat 2, SSUL2 region. The span at 451-472 (GKPSSSSSSVGYKSAPVSSAGG) shows a compositional bias: low complexity. The tract at residues 480–562 (PEVIATVRGL…RVLEQIIQRP (83 aa)) is rbcS-like repeat 3, SSUL3. Positions 565-590 (NVVAGRSPSSSSASTSSSASSNGFGS) are disordered. Over residues 568 to 587 (AGRSPSSSSASTSSSASSNG) the composition is skewed to low complexity. The interval 599-687 (SAVRLDNSVV…RVLETIIQRP (89 aa)) is rbcS-like repeat 4, SSUL4.

The protein belongs to the gamma-class carbonic anhydrase family. In terms of assembly, probably forms homotrimers. Full length CcmM interacts with CcaA, CcmK1, CcmK2, CcmK4, CcmL, CcmN and itself, while the N-terminus of CcmM (first 249 residues) only interacts with CcaA, CcmM and CcmN. A probable CcmM-CcaA-CcmN complex as well as a CcaA-RuBisCO-CcmM complex can also be isolated. Interacts with full-length CcaA and the first 220 residues of CcaA; surface residues Gln-177 to Gln-188 are responsible in part for binding. Multiple forms of the protein of 73 (full length), 62, 52 (the most predominant form) and 36 kDa are seen even in the presence of protease inhibitors. CcmM52 interacts with CcaA.

It localises to the carboxysome. Functionally, functions as a scaffold protein for the assembly of beta-carboxysomes, initiates carboxysome assembly via its N-terminal domain binding to CcaA, CcmK and CcmL. Binds HCO(3)-, suggesting it may play a role in the activity or regulation of bicarbonate dehydration. Also initiates carboxysome assembly by coalescing RuBisCO (ribulose bisphosphate carboxylase, rbcL-rbcS) via its SSU-like domains. Produced as a full-length and a shorter form; both forms are required for correct carboxysome assembly and growth. Despite its strong similarity to gamma-class carbonic anhydrase (CA) it does not have detectable CA activity. Its function is as follows. Beta-carboxysome assembly initiates when soluble RuBisCO is condensed into a liquid matrix in a pre-carboxysome by the RbcS-like domains of probably both forms of CcmM. CcmN interacts with the N-terminus of full length CcmM, and then recruits the shell proteins (CcmK) via CcmN's encapsulation peptide. CcmM73 also interacts with CcmK proteins and CcmL directly. Shell formation requires CcmK proteins and CcmO. CcmL caps the otherwise elongated carboxysome. Once fully encapsulated carboxysomes are formed, they migrate within the cell probably via interactions with the cytoskeleton. The sequence is that of Carboxysome assembly protein CcmM from Synechocystis sp. (strain ATCC 27184 / PCC 6803 / Kazusa).